We begin with the raw amino-acid sequence, 344 residues long: L-rhamnose-proton symporter (344 aa).

10 helical membrane passes run 4–24, 38–58, 68–88, 101–121, 137–157, 175–195, 214–234, 259–279, 290–310, and 323–343; these read AITMGIFWHLIGAASAACFYA, WSIGGIVSWLILPWTISALLL, FNLSTLLPVFLFGAMWGIGNI, MGIGIAIGITLIVGTLMTPII, TLLGVLVALIGVGIVTRAGQL, LLLAVMCGIFSAGMSFAMNAA, LPSYVVIMGGGALINLGFCFV, ILLSALGGLMWYLQFFFYAWG, ISWMLHMSFYVLCGGIVGLVL, and VLSLGCVVIIIAANIVGMGMA.

It belongs to the L-rhamnose transporter (TC 2.A.7.6) family.

Its subcellular location is the cell inner membrane. It carries out the reaction L-rhamnopyranose(in) + H(+)(in) = L-rhamnopyranose(out) + H(+)(out). Uptake of L-rhamnose across the cytoplasmic membrane with the concomitant transport of protons into the cell (symport system). This chain is L-rhamnose-proton symporter, found in Citrobacter koseri (strain ATCC BAA-895 / CDC 4225-83 / SGSC4696).